Consider the following 542-residue polypeptide: Isocitrate lyase (542 aa).

Position 102–104 (102–104) interacts with substrate; the sequence is SGW. Asp170 is a binding site for Mg(2+). The active-site Proton acceptor is the Cys208. Substrate is bound by residues 209-210, Arg245, 428-432, and Thr462; these read GH and NLSPS.

This sequence belongs to the isocitrate lyase/PEP mutase superfamily. Isocitrate lyase family. As to quaternary structure, homotetramer. Requires Mg(2+) as cofactor.

The protein resides in the glyoxysome. It catalyses the reaction D-threo-isocitrate = glyoxylate + succinate. The catalysed reaction is (2S,3R)-3-hydroxybutane-1,2,3-tricarboxylate = pyruvate + succinate. The protein operates within carbohydrate metabolism; glyoxylate cycle; (S)-malate from isocitrate: step 1/2. In terms of biological role, catalyzes the formation of succinate and glyoxylate from isocitrate, a key step of the glyoxylate cycle, which operates as an anaplerotic route for replenishing the tricarboxylic acid cycle. Required for growth on ethanol or acetate, but dispensable when fermentable carbon sources are available. Also acts on 2-methylisocitrate. The sequence is that of Isocitrate lyase from Kluyveromyces lactis (strain ATCC 8585 / CBS 2359 / DSM 70799 / NBRC 1267 / NRRL Y-1140 / WM37) (Yeast).